A 149-amino-acid polypeptide reads, in one-letter code: Large ribosomal subunit protein bL9 (149 aa).

The protein belongs to the bacterial ribosomal protein bL9 family.

Its function is as follows. Binds to the 23S rRNA. The sequence is that of Large ribosomal subunit protein bL9 from Anaeromyxobacter dehalogenans (strain 2CP-1 / ATCC BAA-258).